We begin with the raw amino-acid sequence, 189 residues long: Probable RNA 2'-phosphotransferase (189 aa).

Belongs to the KptA/TPT1 family.

Its function is as follows. Removes the 2'-phosphate from RNA via an intermediate in which the phosphate is ADP-ribosylated by NAD followed by a presumed transesterification to release the RNA and generate ADP-ribose 1''-2''-cyclic phosphate (APPR&gt;P). May function as an ADP-ribosylase. The protein is Probable RNA 2'-phosphotransferase of Streptomyces griseus subsp. griseus (strain JCM 4626 / CBS 651.72 / NBRC 13350 / KCC S-0626 / ISP 5235).